The following is a 1134-amino-acid chain: Early transcription factor large subunit homolog (1134 aa).

The Helicase ATP-binding domain maps to 52-352 (KGGRAFFPCD…PNGQPLQRQQ (301 aa)). Position 99 to 106 (99 to 106 (WQTGTGKS)) interacts with ATP. Positions 281 to 284 (DEIH) match the DEAH box motif. The region spanning 524–725 (MMKDILSIIR…EGDKALRKHA (202 aa)) is the Helicase C-terminal domain.

It belongs to the DEAD box helicase family. DEAH subfamily.

Its subcellular location is the virion. It carries out the reaction ATP + H2O = ADP + phosphate + H(+). Its function is as follows. Putative initation factor. The polypeptide is Early transcription factor large subunit homolog (African swine fever virus (isolate Pig/Kenya/KEN-50/1950) (ASFV)).